The chain runs to 213 residues: Orotate phosphoribosyltransferase (213 aa).

Lysine 26 is a 5-phospho-alpha-D-ribose 1-diphosphate binding site. Residue 34–35 (FF) coordinates orotate. Residues 72–73 (YK), arginine 99, lysine 100, lysine 103, histidine 105, and 124–132 (DDVITAGTA) contribute to the 5-phospho-alpha-D-ribose 1-diphosphate site. 2 residues coordinate orotate: threonine 128 and arginine 156.

It belongs to the purine/pyrimidine phosphoribosyltransferase family. PyrE subfamily. As to quaternary structure, homodimer. Requires Mg(2+) as cofactor.

It catalyses the reaction orotidine 5'-phosphate + diphosphate = orotate + 5-phospho-alpha-D-ribose 1-diphosphate. It functions in the pathway pyrimidine metabolism; UMP biosynthesis via de novo pathway; UMP from orotate: step 1/2. Functionally, catalyzes the transfer of a ribosyl phosphate group from 5-phosphoribose 1-diphosphate to orotate, leading to the formation of orotidine monophosphate (OMP). The protein is Orotate phosphoribosyltransferase of Shigella flexneri.